Here is a 335-residue protein sequence, read N- to C-terminus: UPF0353 protein MUL_1490 (335 aa).

A run of 2 helical transmembrane segments spans residues 18-38 (WFFLFLLVVAGLIAIYVVLQL) and 67-87 (IPAMLLALSLVLFTVAMAGPT). Residues 98 to 298 (VVMLVIDVSQ…SVYVSLQQQI (201 aa)) enclose the VWFA domain. A helical transmembrane segment spans residues 309-329 (MGWLRLGALVLVAAALAALLI).

This sequence belongs to the UPF0353 family.

It is found in the cell membrane. This is UPF0353 protein MUL_1490 from Mycobacterium ulcerans (strain Agy99).